A 439-amino-acid chain; its full sequence is Protein translocase subunit SecY (439 aa).

10 consecutive transmembrane segments (helical) span residues 19 to 39, 68 to 88, 116 to 136, 151 to 171, 176 to 196, 216 to 236, 269 to 289, 312 to 332, 373 to 393, and 396 to 416; these read ILFT…TVPG, YSLF…VQLL, YITL…FQAM, LMIG…GEQI, FGSG…PSAV, WLFV…TTFV, VIPV…LQFL, WTGM…YSFV, VGAL…NVWG, and KIVA…IQAV.

The protein belongs to the SecY/SEC61-alpha family. As to quaternary structure, component of the Sec protein translocase complex. Heterotrimer consisting of SecY, SecE and SecG subunits. The heterotrimers can form oligomers, although 1 heterotrimer is thought to be able to translocate proteins. Interacts with the ribosome. Interacts with SecDF, and other proteins may be involved. Interacts with SecA.

Its subcellular location is the cell membrane. Its function is as follows. The central subunit of the protein translocation channel SecYEG. Consists of two halves formed by TMs 1-5 and 6-10. These two domains form a lateral gate at the front which open onto the bilayer between TMs 2 and 7, and are clamped together by SecE at the back. The channel is closed by both a pore ring composed of hydrophobic SecY resides and a short helix (helix 2A) on the extracellular side of the membrane which forms a plug. The plug probably moves laterally to allow the channel to open. The ring and the pore may move independently. The polypeptide is Protein translocase subunit SecY (Lactococcus lactis subsp. lactis (strain IL1403) (Streptococcus lactis)).